The chain runs to 673 residues: DNA ligase (673 aa).

Residues 34 to 38 (DAEYD), 83 to 84 (SL), and Glu-116 contribute to the NAD(+) site. Lys-118 (N6-AMP-lysine intermediate) is an active-site residue. NAD(+) contacts are provided by Arg-139, Glu-176, Lys-293, and Lys-317. Residues Cys-411, Cys-414, Cys-429, and Cys-435 each coordinate Zn(2+). The BRCT domain occupies 595 to 673 (NQQNPFFGKT…EDEFLKWVNS (79 aa)).

It belongs to the NAD-dependent DNA ligase family. LigA subfamily. Mg(2+) serves as cofactor. The cofactor is Mn(2+).

It carries out the reaction NAD(+) + (deoxyribonucleotide)n-3'-hydroxyl + 5'-phospho-(deoxyribonucleotide)m = (deoxyribonucleotide)n+m + AMP + beta-nicotinamide D-nucleotide.. In terms of biological role, DNA ligase that catalyzes the formation of phosphodiester linkages between 5'-phosphoryl and 3'-hydroxyl groups in double-stranded DNA using NAD as a coenzyme and as the energy source for the reaction. It is essential for DNA replication and repair of damaged DNA. The chain is DNA ligase from Legionella pneumophila (strain Lens).